We begin with the raw amino-acid sequence, 394 residues long: NAD(P)H-quinone oxidoreductase subunit H (394 aa).

It belongs to the complex I 49 kDa subunit family. NDH-1 can be composed of about 15 different subunits; different subcomplexes with different compositions have been identified which probably have different functions.

The protein resides in the cellular thylakoid membrane. It carries out the reaction a plastoquinone + NADH + (n+1) H(+)(in) = a plastoquinol + NAD(+) + n H(+)(out). The enzyme catalyses a plastoquinone + NADPH + (n+1) H(+)(in) = a plastoquinol + NADP(+) + n H(+)(out). Its function is as follows. NDH-1 shuttles electrons from an unknown electron donor, via FMN and iron-sulfur (Fe-S) centers, to quinones in the respiratory and/or the photosynthetic chain. The immediate electron acceptor for the enzyme in this species is believed to be plastoquinone. Couples the redox reaction to proton translocation, and thus conserves the redox energy in a proton gradient. Cyanobacterial NDH-1 also plays a role in inorganic carbon-concentration. The sequence is that of NAD(P)H-quinone oxidoreductase subunit H from Synechococcus sp. (strain JA-3-3Ab) (Cyanobacteria bacterium Yellowstone A-Prime).